We begin with the raw amino-acid sequence, 458 residues long: Histone acetyltransferase KAT8 (458 aa).

Composition is skewed to low complexity over residues methionine 1 to threonine 17 and proline 25 to alanine 35. The disordered stretch occupies residues methionine 1–glutamate 52. Alanine 2 bears the N-acetylalanine mark. Serine 37 and serine 42 each carry phosphoserine. In terms of domain architecture, Tudor-knot spans valine 55–alanine 110. Position 113 is an N6-acetyllysine (lysine 113). Positions arginine 140 to isoleucine 149 match the Nuclear localization signal motif. Residues threonine 174–proline 447 enclose the MYST-type HAT domain. Positions threonine 174–lysine 458 are sufficient for interaction with KANSL1. The C2HC MYST-type zinc-finger motif lies at leucine 207–tryptophan 232. The Zn(2+) site is built by cysteine 210, cysteine 213, histidine 226, and cysteine 230. Lysine 274 bears the N6-acetyllysine mark. Residues isoleucine 317, threonine 319, arginine 325, arginine 326, glycine 327, glycine 329, and lysine 330 each contribute to the acetyl-CoA site. Serine 348 is modified (phosphoserine). Glutamate 350 acts as the Proton donor/acceptor in catalysis. Acetyl-CoA is bound by residues serine 354, serine 363, tyrosine 408, and lysine 432.

This sequence belongs to the MYST (SAS/MOZ) family. As to quaternary structure, component of a multisubunit histone acetyltransferase complex (MSL) at least composed of the MOF/KAT8, MSL1/hampin, MSL2L1 and MSL3L1. Component of the NSL complex at least composed of MOF/KAT8, KANSL1, KANSL2, KANSL3, MCRS1, PHF20, OGT1/OGT, WDR5 and HCFC1. Component of some MLL1/MLL complex, at least composed of the core components KMT2A/MLL1, ASH2L, HCFC1, WDR5 and RBBP5, as well as the facultative components BACC1, CHD8, E2F6, HSP70, INO80C, KANSL1, LAS1L, MAX, MCRS1, MGA, MOF/KAT8, PELP1, PHF20, PRP31, RING2, RUVB1/TIP49A, RUVB2/TIP49B, SENP3, TAF1, TAF4, TAF6, TAF7, TAF9 and TEX10. Interacts with the chromodomain of MORF4L1/MRG15. Interacts with ATM (via its Tudor-knot domain); possibly regulating the activity of ATM. Interacts with NELFD. Post-translationally, acetylation at Lys-274 facilitates cognate substrate Lys-binding and acetylation. Although considered as an autoacetylation event, acetylation at Lys-274 probably takes place via a non-enzymatic process following acetyl-CoA-binding, which primes KAT8 for cognate protein-lysine acetylation. During oocyte development, expressed in both oocytes and granulosa cells.

It is found in the nucleus. The protein localises to the chromosome. It localises to the mitochondrion. It carries out the reaction L-lysyl-[histone] + acetyl-CoA = N(6)-acetyl-L-lysyl-[histone] + CoA + H(+). The enzyme catalyses L-lysyl-[protein] + acetyl-CoA = N(6)-acetyl-L-lysyl-[protein] + CoA + H(+). The catalysed reaction is propanoyl-CoA + L-lysyl-[protein] = N(6)-propanoyl-L-lysyl-[protein] + CoA + H(+). With respect to regulation, the acetyltransferase activity is inhibited by anacardic acid derivatives. Its function is as follows. Histone acetyltransferase that catalyzes histone H4 acetylation at 'Lys-5'- and 'Lys-8' (H4K5ac and H4K8ac) or 'Lys-16' (H4K16ac), depending on the context. Catalytic component of the MSL histone acetyltransferase complex, a multiprotein complex that mediates the majority of histone H4 acetylation at 'Lys-16' (H4K16ac), an epigenetic mark that prevents chromatin compaction. H4K16ac constitutes the only acetylation mark intergenerationally transmitted and regulates key biological processes, such as oogenesis, embryonic stem cell pluripotency, hematopoiesis or glucose metabolism. The MSL complex is required for chromosome stability and genome integrity by maintaining homeostatic levels of H4K16ac. The MSL complex is also involved in gene dosage by promoting up-regulation of genes expressed by the X chromosome. X up-regulation is required to compensate for autosomal biallelic expression. The MSL complex also participates in gene dosage compensation by promoting expression of Tsix non-coding RNA. As part of the NSL histone acetyltransferase complex, catalyzes histone H4 acetylation at 'Lys-5'- and 'Lys-8' (H4K5ac and H4K8ac) at transcription start sites and promotes transcription initiation. The NSL complex also acts as a regulator of gene expression in mitochondria: KAT8 associates with mitochondrial DNA and controls expression of respiratory genes in an acetyltransferase-dependent mechanism. Also functions as an acetyltransferase for non-histone targets, such as ALKBH5, COX17, IRF3, KDM1A/LSD1, LMNA, PAX7 or TP53/p53. Acts as an inhibitor of antiviral immunity by acetylating IRF3, preventing IRF3 recruitment to promoters. Acts as a regulator of asymmetric division in muscle stem cells by mediating acetylation of PAX7. As part of the NSL complex, acetylates TP53/p53 at 'Lys-120'. Acts as a regulator of epithelial-to-mesenchymal transition as part of the NSL complex by mediating acetylation of KDM1A/LSD1. The NSL complex is required for nuclear architecture maintenance by mediating acetylation of LMNA. Promotes mitochondrial integrity by catalyzing acetylation of COX17. In addition to protein acetyltransferase activity, able to mediate protein propionylation. This is Histone acetyltransferase KAT8 from Mus musculus (Mouse).